The following is a 607-amino-acid chain: Aspartate--tRNA(Asp/Asn) ligase (607 aa).

Residue E176 participates in L-aspartate binding. Residues 200–203 (QQFK) form an aspartate region. Positions 222 and 456 each coordinate L-aspartate. 222-224 (RDE) is an ATP binding site. An ATP-binding site is contributed by E496. Residue R503 coordinates L-aspartate. 548–551 (GIDR) is a binding site for ATP.

Belongs to the class-II aminoacyl-tRNA synthetase family. Type 1 subfamily. As to quaternary structure, homodimer.

It localises to the cytoplasm. The enzyme catalyses tRNA(Asx) + L-aspartate + ATP = L-aspartyl-tRNA(Asx) + AMP + diphosphate. Its function is as follows. Aspartyl-tRNA synthetase with relaxed tRNA specificity since it is able to aspartylate not only its cognate tRNA(Asp) but also tRNA(Asn). Reaction proceeds in two steps: L-aspartate is first activated by ATP to form Asp-AMP and then transferred to the acceptor end of tRNA(Asp/Asn). This chain is Aspartate--tRNA(Asp/Asn) ligase, found in Parvibaculum lavamentivorans (strain DS-1 / DSM 13023 / NCIMB 13966).